The primary structure comprises 226 residues: Cytidylate kinase (226 aa).

Position 10–18 (10–18) interacts with ATP; that stretch reads GPASSGKST.

This sequence belongs to the cytidylate kinase family. Type 1 subfamily.

The protein localises to the cytoplasm. It catalyses the reaction CMP + ATP = CDP + ADP. The catalysed reaction is dCMP + ATP = dCDP + ADP. The polypeptide is Cytidylate kinase (Streptococcus pyogenes serotype M1).